Here is a 74-residue protein sequence, read N- to C-terminus: MSKEDAIEVEGVVTESLPNAMFRVDLDNGFNVLAHISGKIRRNYIKILPGDRVKVELSPYDLNKGRITYRLKKK.

Residues methionine 1–lysine 72 enclose the S1-like domain.

This sequence belongs to the IF-1 family. In terms of assembly, component of the 30S ribosomal translation pre-initiation complex which assembles on the 30S ribosome in the order IF-2 and IF-3, IF-1 and N-formylmethionyl-tRNA(fMet); mRNA recruitment can occur at any time during PIC assembly.

The protein localises to the cytoplasm. Its function is as follows. One of the essential components for the initiation of protein synthesis. Stabilizes the binding of IF-2 and IF-3 on the 30S subunit to which N-formylmethionyl-tRNA(fMet) subsequently binds. Helps modulate mRNA selection, yielding the 30S pre-initiation complex (PIC). Upon addition of the 50S ribosomal subunit IF-1, IF-2 and IF-3 are released leaving the mature 70S translation initiation complex. This is Translation initiation factor IF-1 from Synechococcus sp. (strain JA-3-3Ab) (Cyanobacteria bacterium Yellowstone A-Prime).